A 1070-amino-acid chain; its full sequence is [F-actin]-monooxygenase MICAL1 (1070 aa).

The interval 1–489 is monooxygenase domain; sequence MASTISTNPA…RDLYDMEAKE (489 aa). FAD is bound by residues Cys-95, 114–116, 121–123, Phe-181, Tyr-293, and Asp-393; these read EKR and RHN. Thr-475 carries the post-translational modification Phosphothreonine. The Calponin-homology (CH) domain occupies 508–612; sequence VGSQEELLRW…YLSHFHSAFK (105 aa). Positions 643 to 690 are disordered; it reads QRTRTQENGEDAGGKKPRLEVKAETPSTEEPPVPKPDEPMTPPSQQQD. The span at 646 to 665 shows a compositional bias: basic and acidic residues; sequence RTQENGEDAGGKKPRLEVKA. A compositionally biased stretch (pro residues) spans 671-684; sequence EEPPVPKPDEPMTP. Positions 695–757 constitute an LIM zinc-binding domain; the sequence is DLCALCGQHL…LQHLPQTGHE (63 aa). Positions 697, 700, 718, 721, 724, 727, 747, and 750 each coordinate Zn(2+). 2 disordered regions span residues 754–838 and 865–887; these read TGHE…RSCS and MEMGEEERSSSSEEETEEEEDVP. Positions 755 to 766 are enriched in basic and acidic residues; that stretch reads GHEEDSSDRGPE. A compositionally biased stretch (polar residues) spans 770–781; it reads LPMSSENNTPSG. 3 positions are modified to phosphoserine: Ser-793, Ser-875, and Ser-876. Acidic residues predominate over residues 876–887; that stretch reads SEEETEEEEDVP. Residues 904–1070 form an important for interaction with RAB8A region; that stretch reads GTMNNYPTWR…ELASEPGVQG (167 aa). The bMERB domain maps to 921 to 1070; the sequence is KEEEMKRFCK…ELASEPGVQG (150 aa). Positions 928-1030 form a coiled coil; sequence FCKAQAIQRR…EETLKTAADR (103 aa). Phosphoserine is present on Ser-1060.

It belongs to the Mical family. In terms of assembly, interacts with STK38 and STK38L. Associates with the SH3 domain of NEDD9. Interacts with VIM and PLXNA3. Interacts with RAB1B, RAB8A, RAB10, RAB13 and RAB15 (in their GTP-bound forms); binding to RAB1B is of low affinity compared to other Rab proteins; at least in case of RAB8A and RAB10 can bind 2 molecules of the Rab proteins simultaneously. Interacts with GRAF1/ARHGAP26, GRAF2/ARHGAP10, RAB8A, RAB8B and RAB10; may bind simultaneously to GRAFs and Rabs and connects GRAFs to Rabs. Does not interact with RAB1 and RAB11A. The cofactor is FAD.

It is found in the cytoplasm. The protein localises to the cytoskeleton. It localises to the endosome membrane. The protein resides in the midbody. It catalyses the reaction L-methionyl-[F-actin] + NADPH + O2 + H(+) = L-methionyl-(R)-S-oxide-[F-actin] + NADP(+) + H2O. The catalysed reaction is NADPH + O2 + H(+) = H2O2 + NADP(+). Monooxygenase that promotes depolymerization of F-actin by mediating oxidation of specific methionine residues on actin to form methionine-sulfoxide, resulting in actin filament disassembly and preventing repolymerization. In the absence of actin, it also functions as a NADPH oxidase producing H(2)O(2). Acts as a cytoskeletal regulator that connects NEDD9 to intermediate filaments. Also acts as a negative regulator of apoptosis via its interaction with STK38 and STK38L; acts by antagonizing STK38 and STK38L activation by MST1/STK4. Involved in regulation of lamina-specific connectivity in the nervous system such as the development of lamina-restricted hippocampal connections. Through redox regulation of the actin cytoskeleton controls the intracellular distribution of secretory vesicles containing L1/neurofascin/NgCAM family proteins in neurons, thereby regulating their cell surface levels. May act as Rab effector protein and play a role in vesicle trafficking. Promotes endosomal tubule extension by associating with RAB8 (RAB8A or RAB8B), RAB10 and GRAF (GRAF1/ARHGAP26 or GRAF2/ARHGAP10) on the endosomal membrane which may connect GRAFs to Rabs, thereby participating in neosynthesized Rab8-Rab10-Rab11-dependent protein export. The polypeptide is [F-actin]-monooxygenase MICAL1 (MICAL1) (Bos taurus (Bovine)).